A 236-amino-acid chain; its full sequence is 2-C-methyl-D-erythritol 4-phosphate cytidylyltransferase (236 aa).

Belongs to the IspD/TarI cytidylyltransferase family. IspD subfamily. In terms of assembly, homodimer.

The catalysed reaction is 2-C-methyl-D-erythritol 4-phosphate + CTP + H(+) = 4-CDP-2-C-methyl-D-erythritol + diphosphate. It participates in isoprenoid biosynthesis; isopentenyl diphosphate biosynthesis via DXP pathway; isopentenyl diphosphate from 1-deoxy-D-xylulose 5-phosphate: step 2/6. Its function is as follows. Catalyzes the formation of 4-diphosphocytidyl-2-C-methyl-D-erythritol from CTP and 2-C-methyl-D-erythritol 4-phosphate (MEP). The protein is 2-C-methyl-D-erythritol 4-phosphate cytidylyltransferase of Salmonella paratyphi B (strain ATCC BAA-1250 / SPB7).